The following is a 287-amino-acid chain: Urease accessory protein UreD (287 aa).

This sequence belongs to the UreD family. In terms of assembly, ureD, UreF and UreG form a complex that acts as a GTP-hydrolysis-dependent molecular chaperone, activating the urease apoprotein by helping to assemble the nickel containing metallocenter of UreC. The UreE protein probably delivers the nickel.

The protein resides in the cytoplasm. Required for maturation of urease via the functional incorporation of the urease nickel metallocenter. The protein is Urease accessory protein UreD of Herpetosiphon aurantiacus (strain ATCC 23779 / DSM 785 / 114-95).